The following is a 147-amino-acid chain: 3-dehydroquinate dehydratase (147 aa).

The active-site Proton acceptor is tyrosine 23. Residues asparagine 74, histidine 80, and aspartate 87 each contribute to the substrate site. Catalysis depends on histidine 100, which acts as the Proton donor. Substrate-binding positions include 101–102 (IS) and arginine 111.

This sequence belongs to the type-II 3-dehydroquinase family. As to quaternary structure, homododecamer.

The enzyme catalyses 3-dehydroquinate = 3-dehydroshikimate + H2O. It functions in the pathway metabolic intermediate biosynthesis; chorismate biosynthesis; chorismate from D-erythrose 4-phosphate and phosphoenolpyruvate: step 3/7. Its function is as follows. Catalyzes a trans-dehydration via an enolate intermediate. The polypeptide is 3-dehydroquinate dehydratase (Prochlorococcus marinus (strain MIT 9215)).